The following is a 359-amino-acid chain: Replication-associated protein (359 aa).

Residues 18 to 121 (RHRNANTFLT…PKDKWEKGTY (104 aa)) enclose the CRESS-DNA virus Rep endonuclease domain. Positions 25–28 (FLTY) match the RCR-1 motif. A divalent metal cation-binding residues include E59, H67, and H69. Residues 67–69 (HCH) carry the RCR-2 motif. Y107 functions as the For DNA cleavage activity in the catalytic mechanism. The RCR-3 signature appears at 107–110 (YILK). An a divalent metal cation-binding site is contributed by D111. Residues 181 to 193 (SASRLFPDIAEPY) are oligomerization. 235–242 (GPTRTGKT) is a binding site for ATP. The tract at residues 258 to 276 (IDWSSYDEEAQYNVVDDIP) is transactivation. A Nuclear localization signal motif is present at residues 298–309 (KYGKRRKVASKS).

Belongs to the geminiviridae Rep protein family. In terms of assembly, homooligomer. Rep binds to repeated DNA motifs (iterons). Forms the O-complex, which is a Rep-DNA complex involved in the initiation of RCR. Part of the C- and V-complexes which are RepA-Rep-DNA complexes involved in the c-sense and v-sense transcription. Mg(2+) is required as a cofactor. It depends on Mn(2+) as a cofactor.

The protein resides in the host nucleus. Essential for the replication of viral ssDNA. The closed circular ssDNA genome is first converted to a superhelical dsDNA. Rep binds a specific region at the genome origin of replication. It introduces an endonucleolytic nick within the conserved sequence 5'-TAATATTAC-3' in the intergenic region of the genome present in all geminiviruses, thereby initiating the rolling circle replication (RCR). Following cleavage, binds covalently to the 5'-phosphate of DNA as a tyrosyl ester. The cleavage gives rise to a free 3'-OH that serves as a primer for the cellular DNA polymerase. The polymerase synthesizes the (+) strand DNA by rolling circle mechanism. After one round of replication, a Rep-catalyzed nucleotidyl transfer reaction releases a circular single-stranded virus genome, thereby terminating the replication. Displays origin-specific DNA cleavage, nucleotidyl transferase, ATPase and helicase activities. Acts as an inhibitor of C-sense gene transcription. The chain is Replication-associated protein from Megathyrsus maximus (PanSV).